The sequence spans 81 residues: Photosystem I iron-sulfur center (81 aa).

2 consecutive 4Fe-4S ferredoxin-type domains span residues 1 to 31 (MSHK…MVPW) and 39 to 68 (IASS…IRVY). Positions 11, 14, 17, 21, 48, 51, 54, and 58 each coordinate [4Fe-4S] cluster.

The cyanobacterial PSI reaction center is composed of one copy each of PsaA,B,C,D,E,F,I,J,K,L,M and X, and forms trimeric complexes. [4Fe-4S] cluster serves as cofactor.

Its subcellular location is the cellular thylakoid membrane. The catalysed reaction is reduced [plastocyanin] + hnu + oxidized [2Fe-2S]-[ferredoxin] = oxidized [plastocyanin] + reduced [2Fe-2S]-[ferredoxin]. Apoprotein for the two 4Fe-4S centers FA and FB of photosystem I (PSI); essential for photochemical activity. FB is the terminal electron acceptor of PSI, donating electrons to ferredoxin. The C-terminus interacts with PsaA/B/D and helps assemble the protein into the PSI complex. Required for binding of PsaD and PsaE to PSI. PSI is a plastocyanin/cytochrome c6-ferredoxin oxidoreductase, converting photonic excitation into a charge separation, which transfers an electron from the donor P700 chlorophyll pair to the spectroscopically characterized acceptors A0, A1, FX, FA and FB in turn. This is Photosystem I iron-sulfur center from Crocosphaera subtropica (strain ATCC 51142 / BH68) (Cyanothece sp. (strain ATCC 51142)).